Here is a 122-residue protein sequence, read N- to C-terminus: Large ribosomal subunit protein uL14 (122 aa).

It belongs to the universal ribosomal protein uL14 family. In terms of assembly, part of the 50S ribosomal subunit. Forms a cluster with proteins L3 and L19. In the 70S ribosome, L14 and L19 interact and together make contacts with the 16S rRNA in bridges B5 and B8.

Functionally, binds to 23S rRNA. Forms part of two intersubunit bridges in the 70S ribosome. The protein is Large ribosomal subunit protein uL14 of Renibacterium salmoninarum (strain ATCC 33209 / DSM 20767 / JCM 11484 / NBRC 15589 / NCIMB 2235).